The sequence spans 271 residues: Tryptophan synthase alpha chain (271 aa).

Residues glutamate 49 and aspartate 60 each act as proton acceptor in the active site.

The protein belongs to the TrpA family. Tetramer of two alpha and two beta chains.

It catalyses the reaction (1S,2R)-1-C-(indol-3-yl)glycerol 3-phosphate + L-serine = D-glyceraldehyde 3-phosphate + L-tryptophan + H2O. It functions in the pathway amino-acid biosynthesis; L-tryptophan biosynthesis; L-tryptophan from chorismate: step 5/5. Its function is as follows. The alpha subunit is responsible for the aldol cleavage of indoleglycerol phosphate to indole and glyceraldehyde 3-phosphate. The sequence is that of Tryptophan synthase alpha chain from Burkholderia mallei (strain NCTC 10247).